The primary structure comprises 466 residues: Asparagine--tRNA ligase (466 aa).

The protein belongs to the class-II aminoacyl-tRNA synthetase family. In terms of assembly, homodimer.

Its subcellular location is the cytoplasm. The enzyme catalyses tRNA(Asn) + L-asparagine + ATP = L-asparaginyl-tRNA(Asn) + AMP + diphosphate + H(+). This is Asparagine--tRNA ligase from Shewanella loihica (strain ATCC BAA-1088 / PV-4).